Here is a 486-residue protein sequence, read N- to C-terminus: Ribulose bisphosphate carboxylase large chain, plasmid (486 aa).

The substrate site is built by asparagine 126 and threonine 176. Lysine 178 acts as the Proton acceptor in catalysis. Lysine 180 contributes to the substrate binding site. Residues lysine 204, aspartate 206, and glutamate 207 each contribute to the Mg(2+) site. N6-carboxylysine is present on lysine 204. The active-site Proton acceptor is the histidine 296. Residues arginine 297, histidine 329, and serine 381 each contribute to the substrate site.

Belongs to the RuBisCO large chain family. Type I subfamily. In terms of assembly, heterohexadecamer of 8 large chains and 8 small chains. Mg(2+) serves as cofactor.

The enzyme catalyses 2 (2R)-3-phosphoglycerate + 2 H(+) = D-ribulose 1,5-bisphosphate + CO2 + H2O. It carries out the reaction D-ribulose 1,5-bisphosphate + O2 = 2-phosphoglycolate + (2R)-3-phosphoglycerate + 2 H(+). Functionally, ruBisCO catalyzes two reactions: the carboxylation of D-ribulose 1,5-bisphosphate, the primary event in carbon dioxide fixation, as well as the oxidative fragmentation of the pentose substrate. Both reactions occur simultaneously and in competition at the same active site. The polypeptide is Ribulose bisphosphate carboxylase large chain, plasmid (cbbL2) (Cupriavidus necator (strain ATCC 17699 / DSM 428 / KCTC 22496 / NCIMB 10442 / H16 / Stanier 337) (Ralstonia eutropha)).